A 239-amino-acid chain; its full sequence is Increased recombination centers protein 22-2 (239 aa).

A signal peptide spans 1–19; it reads MKLSTIFTAFAATIATVAG. Topologically, residues 20–161 are lumenal; sequence YETTGSKQTV…AAVSFFDPRL (142 aa). Residues 162 to 182 form a helical membrane-spanning segment; the sequence is IFLELVLLITFAGLIYVGYEI. Residues 183–239 lie on the Cytoplasmic side of the membrane; the sequence is WGKQYFKGVAPVKAKKVSAAKASSPVATGPSTTSATGYDTNWIPESHLKQKKTKKVN. The interval 202 to 222 is disordered; the sequence is AKASSPVATGPSTTSATGYDT. Polar residues predominate over residues 211–221; sequence GPSTTSATGYD.

It belongs to the IRC22 family.

The protein localises to the endoplasmic reticulum membrane. Its function is as follows. Is probably involved in a pathway contributing to genomic integrity. In Candida albicans (strain SC5314 / ATCC MYA-2876) (Yeast), this protein is Increased recombination centers protein 22-2 (IRC22-2).